The chain runs to 76 residues: Large ribosomal subunit protein bL31 (76 aa).

Positions 16, 18, 36, and 39 each coordinate Zn(2+).

The protein belongs to the bacterial ribosomal protein bL31 family. Type A subfamily. Part of the 50S ribosomal subunit. Zn(2+) is required as a cofactor.

Its function is as follows. Binds the 23S rRNA. This chain is Large ribosomal subunit protein bL31, found in Syntrophobacter fumaroxidans (strain DSM 10017 / MPOB).